Consider the following 154-residue polypeptide: 6,7-dimethyl-8-ribityllumazine synthase (154 aa).

5-amino-6-(D-ribitylamino)uracil-binding positions include F23, 57-59 (AFE), and 81-83 (AVI). 86 to 87 (ST) is a binding site for (2S)-2-hydroxy-3-oxobutyl phosphate. Catalysis depends on H89, which acts as the Proton donor. F114 contributes to the 5-amino-6-(D-ribitylamino)uracil binding site. R128 contacts (2S)-2-hydroxy-3-oxobutyl phosphate.

Belongs to the DMRL synthase family.

It carries out the reaction (2S)-2-hydroxy-3-oxobutyl phosphate + 5-amino-6-(D-ribitylamino)uracil = 6,7-dimethyl-8-(1-D-ribityl)lumazine + phosphate + 2 H2O + H(+). Its pathway is cofactor biosynthesis; riboflavin biosynthesis; riboflavin from 2-hydroxy-3-oxobutyl phosphate and 5-amino-6-(D-ribitylamino)uracil: step 1/2. In terms of biological role, catalyzes the formation of 6,7-dimethyl-8-ribityllumazine by condensation of 5-amino-6-(D-ribitylamino)uracil with 3,4-dihydroxy-2-butanone 4-phosphate. This is the penultimate step in the biosynthesis of riboflavin. This is 6,7-dimethyl-8-ribityllumazine synthase from Campylobacter jejuni subsp. jejuni serotype O:2 (strain ATCC 700819 / NCTC 11168).